The chain runs to 169 residues: NADH-quinone oxidoreductase subunit B (169 aa).

Residues Cys-42, Cys-43, Cys-107, and Cys-136 each contribute to the [4Fe-4S] cluster site.

The protein belongs to the complex I 20 kDa subunit family. As to quaternary structure, NDH-1 is composed of 14 different subunits. Subunits NuoB, C, D, E, F, and G constitute the peripheral sector of the complex. [4Fe-4S] cluster is required as a cofactor.

The protein resides in the cell inner membrane. It catalyses the reaction a quinone + NADH + 5 H(+)(in) = a quinol + NAD(+) + 4 H(+)(out). Functionally, NDH-1 shuttles electrons from NADH, via FMN and iron-sulfur (Fe-S) centers, to quinones in the respiratory chain. The immediate electron acceptor for the enzyme in this species is believed to be ubiquinone. Couples the redox reaction to proton translocation (for every two electrons transferred, four hydrogen ions are translocated across the cytoplasmic membrane), and thus conserves the redox energy in a proton gradient. The chain is NADH-quinone oxidoreductase subunit B from Wolinella succinogenes (strain ATCC 29543 / DSM 1740 / CCUG 13145 / JCM 31913 / LMG 7466 / NCTC 11488 / FDC 602W) (Vibrio succinogenes).